The chain runs to 281 residues: Pantothenate synthetase (281 aa).

Position 30 to 37 (30 to 37) interacts with ATP; sequence MGNLHQGH. The Proton donor role is filled by His37. Gln61 serves as a coordination point for (R)-pantoate. Gln61 is a beta-alanine binding site. An ATP-binding site is contributed by 149 to 152; sequence GNKD. Residue Gln155 coordinates (R)-pantoate. Residues Ile178 and 186–189 contribute to the ATP site; that span reads MSSR.

It belongs to the pantothenate synthetase family. In terms of assembly, homodimer.

The protein localises to the cytoplasm. The enzyme catalyses (R)-pantoate + beta-alanine + ATP = (R)-pantothenate + AMP + diphosphate + H(+). It functions in the pathway cofactor biosynthesis; (R)-pantothenate biosynthesis; (R)-pantothenate from (R)-pantoate and beta-alanine: step 1/1. Its function is as follows. Catalyzes the condensation of pantoate with beta-alanine in an ATP-dependent reaction via a pantoyl-adenylate intermediate. The chain is Pantothenate synthetase from Shewanella sp. (strain MR-7).